Consider the following 731-residue polypeptide: Cucumisin (731 aa).

Positions 1–22 are cleaved as a signal peptide; sequence MSSSLIFKLFFFSLFFSNRLAS. Residues 23–110 constitute a propeptide, activation peptide; sequence RLDSDDDGKN…VFLNEMNELH (88 aa). Positions 34–110 constitute an Inhibitor I9 domain; sequence YIVYMGRKLE…VFLNEMNELH (77 aa). In terms of domain architecture, Peptidase S8 spans 114 to 584; that stretch reads SWDFLGFPLT…SGHVNPLKAV (471 aa). Asp-140 serves as the catalytic Charge relay system. A disulfide bridge connects residues Cys-166 and Cys-174. The active-site Charge relay system is His-204. 2 disulfide bridges follow: Cys-245–Cys-250 and Cys-380–Cys-397. Asn-466 carries an N-linked (GlcNAc...) asparagine glycan. Residue Ser-525 is the Charge relay system of the active site. The propeptide occupies 616–731; sequence GDYSACTSGN…RSPITITSLV (116 aa). Asn-652 carries N-linked (GlcNAc...) asparagine glycosylation.

The protein belongs to the peptidase S8 family. In terms of assembly, monomer and dimer. The C-terminal propeptide is autocleaved. In terms of tissue distribution, specifically expressed in fruits. Expressed in sarcocarp (at protein level).

The protein resides in the secreted. It catalyses the reaction Hydrolysis of proteins with broad specificity.. The chain is Cucumisin from Cucumis melo (Muskmelon).